A 118-amino-acid polypeptide reads, in one-letter code: Large ribosomal subunit protein bL20 (118 aa).

It belongs to the bacterial ribosomal protein bL20 family.

Binds directly to 23S ribosomal RNA and is necessary for the in vitro assembly process of the 50S ribosomal subunit. It is not involved in the protein synthesizing functions of that subunit. The sequence is that of Large ribosomal subunit protein bL20 from Serratia proteamaculans (strain 568).